The primary structure comprises 97 residues: Antitoxin TacA2 (97 aa).

This sequence belongs to the TacA antitoxin family. In terms of assembly, homodimer. Forms a complex with cognate toxin TacT2.

In terms of biological role, antitoxin component of a type II toxin-antitoxin (TA) system. Counteracts the toxic effect of cognate toxin TacT2. Its function is as follows. The TacA2-TacT2 complex both represses and derepresses expression of its own operon. The sequence is that of Antitoxin TacA2 from Salmonella enteritidis.